We begin with the raw amino-acid sequence, 797 residues long: Methionine--tRNA ligase, cytoplasmic (797 aa).

A 'HIGH' region motif is present at residues 26-36 (PYVNNVPHLGN). The 'KMSKS' region signature appears at 348 to 352 (KFSKS). Lys-351 is an ATP binding site. The segment at 601 to 634 (DQLNKTKLSDAKKQKASSKGGGKPKPQPAADREI) is disordered. The tRNA-binding domain occupies 635-738 (TMARLDIRVG…KTANIGERVT (104 aa)).

It belongs to the class-I aminoacyl-tRNA synthetase family.

The protein resides in the cytoplasm. It localises to the cytosol. It catalyses the reaction tRNA(Met) + L-methionine + ATP = L-methionyl-tRNA(Met) + AMP + diphosphate. This Arabidopsis thaliana (Mouse-ear cress) protein is Methionine--tRNA ligase, cytoplasmic.